Reading from the N-terminus, the 565-residue chain is Deformed epidermal autoregulatory factor 1 homolog (565 aa).

Disordered regions lie at residues 29-62 (AAAAAESEAEEPVLSRDEDSEEDADSEAERETRR) and 162-189 (GLKGPAAPLTPGPQSPPTPLAPGQEKGG). The span at 169–181 (PLTPGPQSPPTPL) shows a compositional bias: pro residues. Thr-171 is modified (phosphothreonine). Position 176 is a phosphoserine (Ser-176). Position 179 is a phosphothreonine (Thr-179). The 81-residue stretch at 193 to 273 (NWDPSVYDSE…QCLIQDGILN (81 aa)) folds into the SAND domain. Residues 301–316 (KRRKKENELPTTPVKK) carry the Nuclear localization signal motif. An interaction with LMO4 region spans residues 403 to 478 (IAPFPEAALP…QLKTLFEQAK (76 aa)). A Phosphothreonine modification is found at Thr-432. Ser-443 and Ser-448 each carry phosphoserine. Residues Cys-504, Cys-507, Cys-515, Cys-518, Cys-524, Cys-528, His-536, and Cys-540 each contribute to the Zn(2+) site. Residues 504–540 (CVNCGREAMSECTGCHKVNYCSTFCQRKDWKDHQHVC) form an MYND-type zinc finger.

In terms of assembly, homodimer. Interacts with LMO4; LMO4 blocks export from nucleus. Interacts with LMO2 and CLIM2. May interact with the corepressors NCOR1 and NCRO2. Identified in a complex with XRCC5 and XRCC6. Interacts (via the SAND domain) with the DNA-PK complex subunit XRCC6; the interaction is direct and may be inhibited by DNA-binding. In terms of processing, may be phosphorylated by DNA-PK complex in a DNA independent manner (in vitro). In terms of tissue distribution, ubiquitous. Detected in brain, spleen, adrenal, lung, skeletal muscle, liver, kidney, and in developing germ cells in testis. In pituitary, restricted to hormone-secreting cell types.

The protein localises to the nucleus. It is found in the secreted. Its function is as follows. Transcription factor that binds to sequence with multiple copies of 5'-TTC[CG]G-3' present in its own promoter and that of the HNRPA2B1 gene. Down-regulates transcription of these genes. Binds to the retinoic acid response element (RARE) 5'-AGGGTTCACCGAAAGTTCA-3'. Activates the proenkephalin gene independently of promoter binding, probably through protein-protein interaction. When secreted, behaves as an inhibitor of cell proliferation, by arresting cells in the G0 or G1 phase. Regulates epithelial cell proliferation and side-branching in the mammary gland. Required for neural tube closure and skeletal patterning. Controls the expression of peripheral tissue antigens in pancreatic lymph nodes. Transcriptional activator of EIF4G3. May also involved in behavior. This Rattus norvegicus (Rat) protein is Deformed epidermal autoregulatory factor 1 homolog (Deaf1).